We begin with the raw amino-acid sequence, 291 residues long: Alpha/beta-gliadin A-II (291 aa).

An N-terminal signal peptide occupies residues 1-20 (MKTFPILALLAIVATTATTA). Residues 32-55 (NPSQQQPQEQVPLVQEQQFQGQQQ) are compositionally biased toward low complexity. Disordered stretches follow at residues 32–120 (NPSQ…QQQQ) and 227–250 (QQYP…GSFQ). 2 stretches are compositionally biased toward pro residues: residues 56 to 71 (PFPP…PFPS) and 81 to 104 (FPQP…PQPQ). Composition is skewed to low complexity over residues 105 to 120 (PQYS…QQQQ) and 227 to 237 (QQYPSGQGFFQ). The segment covering 238 to 250 (PSQQNPQAQGSFQ) has biased composition (polar residues).

The protein belongs to the gliadin/glutenin family. Substrate of transglutaminase.

Its function is as follows. Gliadin is the major seed storage protein in wheat. The chain is Alpha/beta-gliadin A-II from Triticum aestivum (Wheat).